A 277-amino-acid polypeptide reads, in one-letter code: ATP-dependent Clp protease proteolytic subunit, mitochondrial (277 aa).

Residues 1-56 constitute a mitochondrion transit peptide; the sequence is MWPGILVGGARVASCRYPALGPRLAAHFPAQRPPQRTLQNGLALQRCLHATATRAL. S153 acts as the Nucleophile in catalysis. The active site involves H178. Position 200 is an N6-succinyllysine (K200). N6-acetyllysine is present on K211. Residues 246–277 are disordered; it reads VHPPQDGEDEPTLVQKEPVEAAPAAEPVPAST. Residues 265 to 277 show a composition bias toward low complexity; that stretch reads EAAPAAEPVPAST.

This sequence belongs to the peptidase S14 family. As to quaternary structure, fourteen CLPP subunits assemble into 2 heptameric rings which stack back to back to give a disk-like structure with a central cavity. Component of the ClpXP complex formed by the assembly of two CLPP heptameric rings with two CLPX hexameric rings, giving rise to a symmetrical structure with two central CLPP rings flanked by a CLPX ring at either end of the complex. As to expression, detected in liver (at protein level). Predominantly expressed in skeletal muscle. Intermediate levels in heart, liver and pancreas. Low in brain, placenta, lung and kidney.

It is found in the mitochondrion matrix. It catalyses the reaction Hydrolysis of proteins to small peptides in the presence of ATP and magnesium. alpha-casein is the usual test substrate. In the absence of ATP, only oligopeptides shorter than five residues are hydrolyzed (such as succinyl-Leu-Tyr-|-NHMec, and Leu-Tyr-Leu-|-Tyr-Trp, in which cleavage of the -Tyr-|-Leu- and -Tyr-|-Trp bonds also occurs).. Its function is as follows. Protease component of the ClpXP complex that cleaves peptides and various proteins in an ATP-dependent process. Has low peptidase activity in the absence of CLPX. The ClpXP complex can degrade CSN1S1, CSN2 and CSN3, as well as synthetic peptides (in vitro) and may be responsible for a fairly general and central housekeeping function rather than for the degradation of specific substrates. Cleaves PINK1 in the mitochondrion. This is ATP-dependent Clp protease proteolytic subunit, mitochondrial from Homo sapiens (Human).